Here is a 90-residue protein sequence, read N- to C-terminus: Acylphosphatase (90 aa).

The Acylphosphatase-like domain maps to A3–G90. Residues R18 and N36 contribute to the active site.

The protein belongs to the acylphosphatase family.

It catalyses the reaction an acyl phosphate + H2O = a carboxylate + phosphate + H(+). The protein is Acylphosphatase (acyP) of Leuconostoc mesenteroides subsp. mesenteroides (strain ATCC 8293 / DSM 20343 / BCRC 11652 / CCM 1803 / JCM 6124 / NCDO 523 / NBRC 100496 / NCIMB 8023 / NCTC 12954 / NRRL B-1118 / 37Y).